The primary structure comprises 285 residues: Acetyl-coenzyme A carboxylase carboxyl transferase subunit beta 2 (285 aa).

Residues 1-20 (MAIRSLFSGNRKKKEDGQEK) form a disordered region. The CoA carboxyltransferase N-terminal domain maps to 26–285 (LMTKCPECRH…MHTKGGVQHV (260 aa)). Zn(2+)-binding residues include Cys-30, Cys-33, Cys-49, and Cys-52. The segment at 30 to 52 (CPECRHIQLTKELEKNHKVCTKC) adopts a C4-type zinc-finger fold.

Belongs to the AccD/PCCB family. Acetyl-CoA carboxylase is a heterohexamer composed of biotin carboxyl carrier protein (AccB), biotin carboxylase (AccC) and two subunits each of ACCase subunit alpha (AccA) and ACCase subunit beta (AccD). The cofactor is Zn(2+).

Its subcellular location is the cytoplasm. The catalysed reaction is N(6)-carboxybiotinyl-L-lysyl-[protein] + acetyl-CoA = N(6)-biotinyl-L-lysyl-[protein] + malonyl-CoA. The protein operates within lipid metabolism; malonyl-CoA biosynthesis; malonyl-CoA from acetyl-CoA: step 1/1. Its function is as follows. Component of the acetyl coenzyme A carboxylase (ACC) complex. Biotin carboxylase (BC) catalyzes the carboxylation of biotin on its carrier protein (BCCP) and then the CO(2) group is transferred by the transcarboxylase to acetyl-CoA to form malonyl-CoA. The protein is Acetyl-coenzyme A carboxylase carboxyl transferase subunit beta 2 of Lysinibacillus sphaericus (strain C3-41).